The sequence spans 645 residues: MSVINCEEVKRDEFHTEKYYDSYNIFGAHIVTEDEMRGVRFTVWAPHAKAMSVVGDFNEWDYEQHKMLQVTEEGIWSLFIPHIEEKEIYKYAIETTAGDVIFKADPYAVYAEVRPNTASVVFDIKGYEWNDKNWSRKKKKKSVYKEAMTVYELHFGSWKKKEDGTLYSYREMAEELIPYVVEHQFTHIEIMPLVEHPYDRSWGYQGTGYYAATSRFGTPHDLMYFVDECHKYGIGVILDWVPGHFCKDAHGLYLFDGTPTYEYKDKDVQENPVWGTVNFDLGKREVRNFLISNALFWMRYFHIDGFRVDAVANMLYWNKEGQEQSNEHAVSFLRELNEAVFAEDEDFLMTAEDSTAWPLVTAPTYEGGLGFNYKWNMGWMNDVLKYMECAPEYRKYIHEKMTFSLLYAYSENFILPLSHDEVVHGKKSLLNKMPGDYWDKFAQLRLLYGYFFTHPGKKLLFMGGEFGQFDEWKDLEDLDWNLHDFEMHRYMHDYFKELIALYKRSKPLWQLDHSPEGFQWIDANNNEQSIFSFIRQGDKQEDALVVVCNFTKATYENYKVGVPDFEYYNEVLNSDAEQYGGSGQVNKKRLKAIQEPFHNQAAHVEITIPPFGVSILRPVKTRKGSKKQDGSKTKVRSNVTSRGKR.

Asp-309 functions as the Nucleophile in the catalytic mechanism. Glu-352 functions as the Proton donor in the catalytic mechanism. Residues 619–645 (VKTRKGSKKQDGSKTKVRSNVTSRGKR) are disordered. Residues 636–645 (RSNVTSRGKR) are compositionally biased toward polar residues.

This sequence belongs to the glycosyl hydrolase 13 family. GlgB subfamily. Monomer.

The enzyme catalyses Transfers a segment of a (1-&gt;4)-alpha-D-glucan chain to a primary hydroxy group in a similar glucan chain.. Its pathway is glycan biosynthesis; glycogen biosynthesis. Functionally, catalyzes the formation of the alpha-1,6-glucosidic linkages in glycogen by scission of a 1,4-alpha-linked oligosaccharide from growing alpha-1,4-glucan chains and the subsequent attachment of the oligosaccharide to the alpha-1,6 position. In Bacillus cereus (strain AH187), this protein is 1,4-alpha-glucan branching enzyme GlgB.